The primary structure comprises 150 residues: Transcriptional repressor NrdR (150 aa).

A zinc finger lies at Cys3–Cys34. An ATP-cone domain is found at Ile49–Ser139.

This sequence belongs to the NrdR family. Zn(2+) is required as a cofactor.

Its function is as follows. Negatively regulates transcription of bacterial ribonucleotide reductase nrd genes and operons by binding to NrdR-boxes. The sequence is that of Transcriptional repressor NrdR from Petrotoga mobilis (strain DSM 10674 / SJ95).